We begin with the raw amino-acid sequence, 430 residues long: 3-phosphoshikimate 1-carboxyvinyltransferase (430 aa).

3 residues coordinate 3-phosphoshikimate: Lys-33, Ser-34, and Arg-38. A phosphoenolpyruvate-binding site is contributed by Lys-33. The phosphoenolpyruvate site is built by Gly-101 and Arg-129. Residues Ser-172, Ser-173, Gln-174, Ser-201, Glu-319, and His-346 each coordinate 3-phosphoshikimate. A phosphoenolpyruvate-binding site is contributed by Gln-174. Glu-319 (proton acceptor) is an active-site residue. Phosphoenolpyruvate-binding residues include Arg-350, Arg-391, and Lys-416.

This sequence belongs to the EPSP synthase family. Monomer.

The protein localises to the cytoplasm. It catalyses the reaction 3-phosphoshikimate + phosphoenolpyruvate = 5-O-(1-carboxyvinyl)-3-phosphoshikimate + phosphate. Its pathway is metabolic intermediate biosynthesis; chorismate biosynthesis; chorismate from D-erythrose 4-phosphate and phosphoenolpyruvate: step 6/7. In terms of biological role, catalyzes the transfer of the enolpyruvyl moiety of phosphoenolpyruvate (PEP) to the 5-hydroxyl of shikimate-3-phosphate (S3P) to produce enolpyruvyl shikimate-3-phosphate and inorganic phosphate. The sequence is that of 3-phosphoshikimate 1-carboxyvinyltransferase from Corynebacterium glutamicum (strain ATCC 13032 / DSM 20300 / JCM 1318 / BCRC 11384 / CCUG 27702 / LMG 3730 / NBRC 12168 / NCIMB 10025 / NRRL B-2784 / 534).